A 101-amino-acid chain; its full sequence is Interleukin-8 (101 aa).

Residues 1 to 22 (MTSKLAVALLAAFLLSAALCEA) form the signal peptide. Arg27 carries the citrulline modification. 2 cysteine pairs are disulfide-bonded: Cys34-Cys61 and Cys36-Cys77.

Belongs to the intercrine alpha (chemokine CxC) family. In terms of assembly, homodimer. Interacts with TNFAIP6 (via Link domain); this interaction interferes with chemokine binding to glycosaminoglycans. Post-translationally, citrullination at Arg-27 prevents proteolysis, and dampens tissue inflammation, it also enhances leukocytosis, possibly through impaired chemokine clearance from the blood circulation.

It localises to the secreted. Chemotactic factor that mediates inflammatory response by attracting neutrophils, basophils, and T-cells to clear pathogens and protect the host from infection. Also plays an important role in neutrophil activation. Released in response to an inflammatory stimulus, exerts its effect by binding to the G-protein-coupled receptors CXCR1 and CXCR2, primarily found in neutrophils, monocytes and endothelial cells. G-protein heterotrimer (alpha, beta, gamma subunits) constitutively binds to CXCR1/CXCR2 receptor and activation by IL8 leads to beta and gamma subunits release from Galpha (GNAI2 in neutrophils) and activation of several downstream signaling pathways including PI3K and MAPK pathways. The chain is Interleukin-8 (CXCL8) from Ovis aries (Sheep).